Reading from the N-terminus, the 561-residue chain is Urocanate hydratase (561 aa).

NAD(+) contacts are provided by residues 52–53 (GG), Q130, 176–178 (GMG), E196, R201, 242–243 (NA), 263–267 (QTSAH), 273–274 (YL), and Y322. Residue C410 is part of the active site. NAD(+) is bound at residue G492.

It belongs to the urocanase family. NAD(+) is required as a cofactor.

The protein localises to the cytoplasm. It catalyses the reaction 4-imidazolone-5-propanoate = trans-urocanate + H2O. The protein operates within amino-acid degradation; L-histidine degradation into L-glutamate; N-formimidoyl-L-glutamate from L-histidine: step 2/3. Catalyzes the conversion of urocanate to 4-imidazolone-5-propionate. The sequence is that of Urocanate hydratase from Enterobacter sp. (strain 638).